The chain runs to 339 residues: DNA-directed RNA polymerase subunit alpha (339 aa).

The interval 1–235 (MTIQKNWQEL…DQLNVFVNFE (235 aa)) is alpha N-terminal domain (alpha-NTD). Residues 251–339 (FNPAFLKKVD…ELAKRFEDHY (89 aa)) form an alpha C-terminal domain (alpha-CTD) region.

This sequence belongs to the RNA polymerase alpha chain family. Homodimer. The RNAP catalytic core consists of 2 alpha, 1 beta, 1 beta' and 1 omega subunit. When a sigma factor is associated with the core the holoenzyme is formed, which can initiate transcription.

It catalyses the reaction RNA(n) + a ribonucleoside 5'-triphosphate = RNA(n+1) + diphosphate. Its function is as follows. DNA-dependent RNA polymerase catalyzes the transcription of DNA into RNA using the four ribonucleoside triphosphates as substrates. The chain is DNA-directed RNA polymerase subunit alpha from Rhodopseudomonas palustris (strain BisB18).